A 113-amino-acid polypeptide reads, in one-letter code: UPF0122 protein LAF_1235 (113 aa).

This sequence belongs to the UPF0122 family.

In terms of biological role, might take part in the signal recognition particle (SRP) pathway. This is inferred from the conservation of its genetic proximity to ftsY/ffh. May be a regulatory protein. In Limosilactobacillus fermentum (strain NBRC 3956 / LMG 18251) (Lactobacillus fermentum), this protein is UPF0122 protein LAF_1235.